Consider the following 335-residue polypeptide: D-alanine--D-alanine ligase (335 aa).

The ATP-grasp domain maps to 124–329 (KMWFSALGVP…FTHYLYSNIK (206 aa)). 154–209 (ALENWGSIFIKAASQGSSVGCYRVDSQDELVSSLEQAFSFSPYVIVEKTINARELE) serves as a coordination point for ATP. Residues Asp283, Glu296, and Asn298 each coordinate Mg(2+).

The protein belongs to the D-alanine--D-alanine ligase family. Requires Mg(2+) as cofactor. It depends on Mn(2+) as a cofactor.

It is found in the cytoplasm. It catalyses the reaction 2 D-alanine + ATP = D-alanyl-D-alanine + ADP + phosphate + H(+). Its pathway is cell wall biogenesis; peptidoglycan biosynthesis. Cell wall formation. In Shewanella woodyi (strain ATCC 51908 / MS32), this protein is D-alanine--D-alanine ligase.